A 211-amino-acid chain; its full sequence is Thymidylate kinase (211 aa).

7-14 (GIDASGKS) contributes to the ATP binding site.

The protein belongs to the thymidylate kinase family.

It carries out the reaction dTMP + ATP = dTDP + ADP. In terms of biological role, phosphorylation of dTMP to form dTDP in both de novo and salvage pathways of dTTP synthesis. In Mesomycoplasma hyopneumoniae (strain 7448) (Mycoplasma hyopneumoniae), this protein is Thymidylate kinase.